The following is a 556-amino-acid chain: CDP-diacylglycerol--glycerol-3-phosphate 3-phosphatidyltransferase, mitochondrial (556 aa).

The N-terminal 28 residues, 1–28, are a transit peptide targeting the mitochondrion; that stretch reads MAAAAAAAAGPVFWRRLLGLLPGRPGLA. Ser49 is subject to Phosphoserine. Position 124–131 (124–131) interacts with ATP; it reads ASLYLGIG. PLD phosphodiesterase domains lie at 215 to 241 and 419 to 457; these read TIGL…SDSY and FGAK…LQEY. Active-site residues include His220, Lys222, and Asp227.

Belongs to the CDP-alcohol phosphatidyltransferase class-II family.

The protein resides in the mitochondrion. It carries out the reaction a CDP-1,2-diacyl-sn-glycerol + sn-glycerol 3-phosphate = a 1,2-diacyl-sn-glycero-3-phospho-(1'-sn-glycero-3'-phosphate) + CMP + H(+). It participates in phospholipid metabolism; phosphatidylglycerol biosynthesis; phosphatidylglycerol from CDP-diacylglycerol: step 1/2. With respect to regulation, activated by calcium and magnesium and inhibited by other bivalent cations. Its function is as follows. Functions in the biosynthesis of the anionic phospholipids phosphatidylglycerol and cardiolipin. In Bos taurus (Bovine), this protein is CDP-diacylglycerol--glycerol-3-phosphate 3-phosphatidyltransferase, mitochondrial (PGS1).